A 399-amino-acid chain; its full sequence is Tyrosine--tRNA ligase 2 (399 aa).

Residues Pro-43 to His-52 carry the 'HIGH' region motif. Positions Lys-227–Ser-231 match the 'KMSKS' region motif. Lys-230 provides a ligand contact to ATP. Residues Ile-338–Gly-398 form the S4 RNA-binding domain.

This sequence belongs to the class-I aminoacyl-tRNA synthetase family. TyrS type 2 subfamily. In terms of assembly, homodimer.

Its subcellular location is the cytoplasm. The enzyme catalyses tRNA(Tyr) + L-tyrosine + ATP = L-tyrosyl-tRNA(Tyr) + AMP + diphosphate + H(+). Its function is as follows. Catalyzes the attachment of tyrosine to tRNA(Tyr) in a two-step reaction: tyrosine is first activated by ATP to form Tyr-AMP and then transferred to the acceptor end of tRNA(Tyr). The polypeptide is Tyrosine--tRNA ligase 2 (Photorhabdus laumondii subsp. laumondii (strain DSM 15139 / CIP 105565 / TT01) (Photorhabdus luminescens subsp. laumondii)).